A 139-amino-acid polypeptide reads, in one-letter code: Large ribosomal subunit protein uL16 (139 aa).

Belongs to the universal ribosomal protein uL16 family. Part of the 50S ribosomal subunit.

Functionally, binds 23S rRNA and is also seen to make contacts with the A and possibly P site tRNAs. The polypeptide is Large ribosomal subunit protein uL16 (rplP) (Neorickettsia sennetsu (strain ATCC VR-367 / Miyayama) (Ehrlichia sennetsu)).